The following is a 344-amino-acid chain: L-rhamnose-proton symporter (344 aa).

10 consecutive transmembrane segments (helical) span residues 4–24 (AITM…CFYA), 38–58 (WSVG…ALLL), 68–88 (FSLS…IGNI), 101–121 (MGIG…TPII), 137–157 (TLLG…AGQL), 175–195 (LVLA…MNAA), 214–234 (LPSY…FCFI), 259–279 (VLLS…YAWG), 290–310 (ISWM…GLVL), and 323–343 (VLSL…IGMA).

This sequence belongs to the L-rhamnose transporter (TC 2.A.7.6) family.

It localises to the cell inner membrane. It catalyses the reaction L-rhamnopyranose(in) + H(+)(in) = L-rhamnopyranose(out) + H(+)(out). Uptake of L-rhamnose across the cytoplasmic membrane with the concomitant transport of protons into the cell (symport system). The chain is L-rhamnose-proton symporter from Escherichia coli O127:H6 (strain E2348/69 / EPEC).